A 383-amino-acid chain; its full sequence is MRMMVAGGGTGGHVFPGIALAEEVVTRHPANDVVFVGTARGLEASVVPAAGFPIELIEVKGLKGKGIAGALLNLLLLPRAFLQSWRILRRWRPDVVVGVGGYASGPVVLTAWAMRIPTAVQEQNAIAGLTNRLLGRVVKAAFTAFPEAARHFAARKVYQLGNPIRRRLMENYMRPESAHGQPRLLVFGGSQGAHALNMRVIEALPHLADLRERIQITHQTGARDREYVEKGYRACGFTPDVREFIDDMSAAYAGCDLVVCRAGATTLAELTVCKKPSILVPFPAAADNHQVKNARSLVDAGAAVMIEERDLTGEVLAREIREILDAPERRERMARAAGRLGSPQAAKEIADVCMELVRRRWGSPFGQAREPGQKPARPPDPAS.

UDP-N-acetyl-alpha-D-glucosamine-binding positions include 10 to 12, asparagine 124, arginine 165, serine 190, isoleucine 245, and glutamine 290; that span reads TGG. Positions 363-383 are disordered; the sequence is SPFGQAREPGQKPARPPDPAS.

It belongs to the glycosyltransferase 28 family. MurG subfamily.

The protein localises to the cell inner membrane. The enzyme catalyses di-trans,octa-cis-undecaprenyl diphospho-N-acetyl-alpha-D-muramoyl-L-alanyl-D-glutamyl-meso-2,6-diaminopimeloyl-D-alanyl-D-alanine + UDP-N-acetyl-alpha-D-glucosamine = di-trans,octa-cis-undecaprenyl diphospho-[N-acetyl-alpha-D-glucosaminyl-(1-&gt;4)]-N-acetyl-alpha-D-muramoyl-L-alanyl-D-glutamyl-meso-2,6-diaminopimeloyl-D-alanyl-D-alanine + UDP + H(+). It participates in cell wall biogenesis; peptidoglycan biosynthesis. Its function is as follows. Cell wall formation. Catalyzes the transfer of a GlcNAc subunit on undecaprenyl-pyrophosphoryl-MurNAc-pentapeptide (lipid intermediate I) to form undecaprenyl-pyrophosphoryl-MurNAc-(pentapeptide)GlcNAc (lipid intermediate II). This Anaeromyxobacter dehalogenans (strain 2CP-1 / ATCC BAA-258) protein is UDP-N-acetylglucosamine--N-acetylmuramyl-(pentapeptide) pyrophosphoryl-undecaprenol N-acetylglucosamine transferase.